Here is a 383-residue protein sequence, read N- to C-terminus: MGSIGAASMEFCFDVFKELKVHHANDNMLYSPFAILSTLAMVFLGAKDSTRTQINKVVHFDKLPGFGDSIEAQCGTSANVHSSLRDILNQITKQNDAYSFSLASRLYAQETYTVVPEYLQCVKELYRGGLESVNFQTAADQARGLINAWVESQTNGIIRNILQPSSVDSQTAMVLVNAIAFKGLWEKAFKAEDTQTIPFRVTEQESKPVQMMHQIGSFKVASMASEKMKILELPFASGTMSMLVLLPDDVSGLEQLESTISFEKLTEWTSSSIMEERKVKVYLPRMKMEEKYNLTSLLMAMGITDLFSSSANLSGISSVGSLKIPQAVHAAYAEINEAGRDVVGSAEAGVDATEEFRADHPFLFCVKHIETNAILLFGRCVSP.

G2 carries the post-translational modification N-acetylglycine. A signal peptide (not cleaved) is located at residues 22-48; that stretch reads HHANDNMLYSPFAILSTLAMVFLGAKD. Phosphoserine is present on S69. An intrachain disulfide couples C74 to C121. N-linked (GlcNAc...) asparagine glycosylation is found at N293 and N312. S345 bears the Phosphoserine mark.

This sequence belongs to the serpin family. Ov-serpin subfamily. Post-translationally, the signal sequence is not cleaved. The functional signal for membrane translocation of ovalbumin becomes accessible when the nascent chain is 50 to 60 residues long. The hydrophobic sequence which lies between residues 27 and 43 folds back on the preceding residues to form an amphipathic hairpin structure which is the signal element recognized by the membrane. Major protein of egg white.

Its subcellular location is the secreted. Its function is as follows. Storage protein of egg white. Lack protease inhibitory activity. The polypeptide is Ovalbumin (SERPINB14) (Coturnix coturnix (Common quail)).